The primary structure comprises 132 residues: Evasin P985 (132 aa).

The N-terminal stretch at 1-24 is a signal peptide; the sequence is MHSTIAYVSLLPLALFVAMHGAST. 6 N-linked (GlcNAc...) asparagine glycosylation sites follow: Asn45, Asn69, Asn74, Asn103, Asn111, and Asn117. 4 disulfide bridges follow: Cys48-Cys70, Cys66-Cys109, Cys83-Cys114, and Cys104-Cys123.

It is found in the secreted. Its function is as follows. Salivary chemokine-binding protein which binds to host chemokine CCL5. The protein is Evasin P985 of Amblyomma parvum (South American tick).